The primary structure comprises 63 residues: Large ribosomal subunit protein uL29 (63 aa).

It belongs to the universal ribosomal protein uL29 family.

This is Large ribosomal subunit protein uL29 from Listeria innocua serovar 6a (strain ATCC BAA-680 / CLIP 11262).